Here is a 1059-residue protein sequence, read N- to C-terminus: WD repeat-containing protein on Y chromosome (1059 aa).

11 WD repeats span residues 121–161 (DFCP…ALTA), 170–209 (RSKT…FTLK), 214–256 (RLPQ…KVTT), 344–383 (CVPR…KPSV), 387–426 (GHTS…LLQT), 476–515 (SHTK…KMTI), 528–567 (LEPV…CMRT), 616–658 (QHSD…RRYD), 714–759 (MRQL…GFKG), 766–805 (MAGD…IPNE), and 849–888 (AHRA…IGLL).

The polypeptide is WD repeat-containing protein on Y chromosome (Anopheles gambiae (African malaria mosquito)).